Reading from the N-terminus, the 226-residue chain is Cobalt transport protein CbiM 1 (226 aa).

6 helical membrane-spanning segments follow: residues 6–26 (GFLP…VVAY), 43–63 (MLLG…MPSV), 75–95 (LGAI…VLLF), 107–127 (TLGA…AAVF), 135–155 (FPFG…TYVT), and 181–201 (VFAL…VVVM).

It belongs to the CbiM family. In terms of assembly, forms an energy-coupling factor (ECF) transporter complex composed of an ATP-binding protein (A component, CbiO), a transmembrane protein (T component, CbiQ) and 2 possible substrate-capture proteins (S components, CbiM and CbiN) of unknown stoichimetry.

It localises to the cell inner membrane. It participates in cofactor biosynthesis; adenosylcobalamin biosynthesis. Part of the energy-coupling factor (ECF) transporter complex CbiMNOQ involved in cobalt import. The polypeptide is Cobalt transport protein CbiM 1 (cbim1) (Pelobacter propionicus (strain DSM 2379 / NBRC 103807 / OttBd1)).